We begin with the raw amino-acid sequence, 223 residues long: MDYAALSPHLGGWALRDHHIGDSSLRGGAINWGNLGSRITSALNSTGRWLYNTGNRFVHSNTFNQIKQGIQDSGVIRNVANLAGETLGALTDIGRLKLQQDLEKLRRKALGEEGPATQAELQALIQALQAQVAAGEPPAAPAAPAPAPPLVPTTRPIPEMVTEVKPPVTSSAPAVPVDVPTTLEMRPPPPKRRRKRARPGQWRARLDSLSGTGVATATRRMCY.

A propeptide spanning residues 1-28 (MDYAALSPHLGGWALRDHHIGDSSLRGG) is cleaved from the precursor. The amphipathic alpha-helix essential for membrane lytic activity stretch occupies residues 29 to 53 (AINWGNLGSRITSALNSTGRWLYNT). Residues 31-52 (NWGNLGSRITSALNSTGRWLYN) are involved in endosomal membrane lysis. Residues 47 to 73 (GRWLYNTGNRFVHSNTFNQIKQGIQDS) form an interaction with hexon protein region. The Nuclear export signal motif lies at 66–75 (IKQGIQDSGV). Disordered regions lie at residues 136 to 155 (EPPA…PTTR) and 166 to 203 (PPVT…GQWR). The segment covering 138–151 (PAAPAAPAPAPPLV) has biased composition (pro residues). The span at 166–182 (PPVTSSAPAVPVDVPTT) shows a compositional bias: low complexity. Residues 189–198 (PPKRRRKRAR) are compositionally biased toward basic residues. Positions 204–215 (ARLDSLSGTGVA) match the Nuclear export signal motif. Residues 206–212 (LDSLSGT) form an interaction with hexon protein region. The segment at 213–223 (GVATATRRMCY) is binds to importin alpha/beta, involved in hexon nuclear import.

It belongs to the adenoviridae protein VI family. As to quaternary structure, interacts with hexon protein; this interaction allows nuclear import of hexon trimers and possibly pre-capsid assembly. Interacts (via C-terminal NLS) with importin alpha/beta. Interacts (via PPxY motif) with host NEDD4 ubiquitine ligase; this interaction might play a role in virus intracellular transport during entry. Part of a complex composed of the core-capsid bridging protein, the endosome lysis protein VI and the hexon-linking protein VIII; these interactions bridge the virus core to the capsid. Interacts with peripentonal hexons; this interaction stabilizes the capsid by gluing two peripentonal hexons together and joining them with an adjacent group-of-nine hexon. In terms of assembly, heterodimer with the viral protease; disulfide-linked. Interacts with the viral protease. In terms of processing, ubiquitinated by Nedd4 following partial capsid disassembly; which might play a role in intracellular virus movement during entry. Contains the major nuclear import and export signals. Proteolytically removed during virion maturation. The processing of the C-terminus turns the precursor into a mature viral structural protein and abrogates its ability to promote hexon import and act as a potential chaperone protein.

The protein resides in the host nucleus. Its subcellular location is the host cytoplasm. It is found in the virion. During virus assembly, promotes hexon trimers nuclear import through nuclear pore complexes via an importin alpha/beta-dependent mechanism. By analogy to herpesviruses capsid assembly, might act as a chaperone to promote the formation of the icosahedral capsid. Its function is as follows. Structural component of the virion that provides increased stability to the particle shell through its interaction with the core-capsid bridging protein and the hexon-linking protein VIII. Fibers shedding during virus entry into host cell allows the endosome lysis protein to be exposed as a membrane-lytic peptide. Exhibits pH-independent membrane fragmentation activity and probably mediates viral rapid escape from host endosome via organellar membrane lysis. It is not clear if it then remains partially associated with the capsid and involved in the intracellular microtubule-dependent transport of capsid to the nucleus, or if it is lost during endosomal penetration. In terms of biological role, cofactor that activates the viral protease. Binds to viral protease in a 1:1 ratio. This is Pre-protein VI from Fowl adenovirus A serotype 1 (strain CELO / Phelps) (FAdV-1).